The sequence spans 541 residues: MAKSLLFGEQARRSMEAGVDKLADTVRVTLGPKGRNVVLDKKFGSPLITNDGVTIAREIELEDPYENMGAQLVKEVATKTNDVAGDGTTTATLLAQAIIREGLKNVTAGANPIQIRTGIRKAVEKAVEEIKVISKPVNGKEDIARVAAISAASEEVGKLIADAMERVGNDGVITVEESKSMGTDLEVVEGMQFDRGYVSAYMVTDTEKMEAVLDDVYILITDKKISNIQEILPILEQIVQQGKKLLIISEDIEGEALSTLVLNKLRGTFTCVGVKAPGFGDRRKEMLQDIAILTGGEVISEELGRDLKDVTIDMLGTADSVKVTKENTTIVNGKGDKVAIKERVSQIRVQIEDTTSEFDKEKLQERLAKLAGGVAVIRVGAATETELKEEKLRIEDALAATKAAVEEGIVPGGGTAYIDIIPKIADLTSDIIDVKLGIDIIRKALEEPVRQIANNAGVEGSVIIEKVKASEAGVGYDALNDKYVDMLKTGIVDPTKVTRSALQNAASIASTFLTTEAAVADIPEKENTPPMAPGMGMDGMY.

ATP is bound by residues 29 to 32, 86 to 90, glycine 413, 477 to 479, and aspartate 493; these read TLGP, DGTTT, and DAL.

Belongs to the chaperonin (HSP60) family. As to quaternary structure, forms a cylinder of 14 subunits composed of two heptameric rings stacked back-to-back. Interacts with the co-chaperonin GroES.

The protein resides in the cytoplasm. The enzyme catalyses ATP + H2O + a folded polypeptide = ADP + phosphate + an unfolded polypeptide.. In terms of biological role, together with its co-chaperonin GroES, plays an essential role in assisting protein folding. The GroEL-GroES system forms a nano-cage that allows encapsulation of the non-native substrate proteins and provides a physical environment optimized to promote and accelerate protein folding. This Clostridium botulinum (strain 657 / Type Ba4) protein is Chaperonin GroEL.